A 485-amino-acid polypeptide reads, in one-letter code: Glutamate--tRNA ligase (485 aa).

The short motif at 10-20 is the 'HIGH' region element; that stretch reads PSPTGHLHIGN. The short motif at 253–257 is the 'KMSKS' region element; sequence KLSKR. Lysine 256 serves as a coordination point for ATP.

This sequence belongs to the class-I aminoacyl-tRNA synthetase family. Glutamate--tRNA ligase type 1 subfamily. As to quaternary structure, monomer.

It localises to the cytoplasm. The catalysed reaction is tRNA(Glu) + L-glutamate + ATP = L-glutamyl-tRNA(Glu) + AMP + diphosphate. Its function is as follows. Catalyzes the attachment of glutamate to tRNA(Glu) in a two-step reaction: glutamate is first activated by ATP to form Glu-AMP and then transferred to the acceptor end of tRNA(Glu). In Enterococcus faecalis (strain ATCC 700802 / V583), this protein is Glutamate--tRNA ligase.